The sequence spans 396 residues: 1-deoxy-D-xylulose 5-phosphate reductoisomerase (396 aa).

5 residues coordinate NADPH: threonine 13, glycine 14, serine 15, isoleucine 16, and asparagine 127. Lysine 128 serves as a coordination point for 1-deoxy-D-xylulose 5-phosphate. Position 129 (glutamate 129) interacts with NADPH. Aspartate 153 lines the Mn(2+) pocket. 1-deoxy-D-xylulose 5-phosphate is bound by residues serine 154, glutamate 155, serine 184, and histidine 207. Mn(2+) is bound at residue glutamate 155. Glycine 213 contributes to the NADPH binding site. 4 residues coordinate 1-deoxy-D-xylulose 5-phosphate: serine 220, asparagine 225, lysine 226, and glutamate 229. Glutamate 229 contributes to the Mn(2+) binding site.

This sequence belongs to the DXR family. Mg(2+) serves as cofactor. It depends on Mn(2+) as a cofactor.

It carries out the reaction 2-C-methyl-D-erythritol 4-phosphate + NADP(+) = 1-deoxy-D-xylulose 5-phosphate + NADPH + H(+). Its pathway is isoprenoid biosynthesis; isopentenyl diphosphate biosynthesis via DXP pathway; isopentenyl diphosphate from 1-deoxy-D-xylulose 5-phosphate: step 1/6. Catalyzes the NADPH-dependent rearrangement and reduction of 1-deoxy-D-xylulose-5-phosphate (DXP) to 2-C-methyl-D-erythritol 4-phosphate (MEP). This chain is 1-deoxy-D-xylulose 5-phosphate reductoisomerase, found in Pseudomonas syringae pv. tomato (strain ATCC BAA-871 / DC3000).